A 566-amino-acid polypeptide reads, in one-letter code: Phenylalanine--tRNA ligase beta subunit (566 aa).

Residues 287 to 362 form the B5 domain; sequence YFQEEVEFNV…IGEGLSSFNP (76 aa). Mg(2+) contacts are provided by aspartate 340, aspartate 346, glutamate 349, and aspartate 350.

Belongs to the phenylalanyl-tRNA synthetase beta subunit family. Type 2 subfamily. Tetramer of two alpha and two beta subunits. It depends on Mg(2+) as a cofactor.

It localises to the cytoplasm. It catalyses the reaction tRNA(Phe) + L-phenylalanine + ATP = L-phenylalanyl-tRNA(Phe) + AMP + diphosphate + H(+). The protein is Phenylalanine--tRNA ligase beta subunit of Borreliella burgdorferi (strain ZS7) (Borrelia burgdorferi).